A 294-amino-acid polypeptide reads, in one-letter code: 2,2',3-trihydroxybiphenyl dioxygenase (294 aa).

VOC domains lie at G7–E120 and G144–G264. Fe cation is bound by residues H147, H209, and E260.

This sequence belongs to the extradiol ring-cleavage dioxygenase family. In terms of assembly, monomer. The cofactor is Fe(2+).

Its pathway is xenobiotic degradation; dibenzo-p-dioxin degradation; 2-hydroxymuconate and catechol from dibenzo-p-dioxin: step 2/3. It functions in the pathway xenobiotic degradation; dibenzofuran degradation; 2-hydroxy-2,4-pentadienoate and salicylate from dibenzofuran: step 2/3. Responsible for meta-cleavage of the first aromatic ring of 2,2',3-trihydroxybiphenyl and 2,3-dihydroxybiphenyl. 2,2',3-trihydroxydiphenyl ether, catechol, 3-methylcatechol, and 4-methylcatechol are oxidized less efficiently and 3,4-dihydroxybiphenyl is oxidized considerably less efficiently. In Sphingomonas paucimobilis (Pseudomonas paucimobilis), this protein is 2,2',3-trihydroxybiphenyl dioxygenase (dbfB).